Here is a 21-residue protein sequence, read N- to C-terminus: Bombinin-H1/H3 (21 aa).

Position 2 is a D-allo-isoleucine; in form H3 (Ile-2). Ile-20 is modified (isoleucine amide).

This sequence belongs to the bombinin family. As to expression, expressed by the skin glands.

The protein localises to the secreted. Its function is as follows. Has antimicrobial and hemolytic activities. The sequence is that of Bombinin-H1/H3 from Bombina variegata (Yellow-bellied toad).